The sequence spans 359 residues: Membrane-bound lytic murein transglycosylase C (359 aa).

Residues Met1–Ser16 form the signal peptide. Cys17 carries N-palmitoyl cysteine lipidation. Cys17 is lipidated: S-diacylglycerol cysteine.

It belongs to the transglycosylase Slt family.

The protein localises to the cell outer membrane. The enzyme catalyses Exolytic cleavage of the (1-&gt;4)-beta-glycosidic linkage between N-acetylmuramic acid (MurNAc) and N-acetylglucosamine (GlcNAc) residues in peptidoglycan, from either the reducing or the non-reducing ends of the peptidoglycan chains, with concomitant formation of a 1,6-anhydrobond in the MurNAc residue.. Murein-degrading enzyme. May play a role in recycling of muropeptides during cell elongation and/or cell division. In Escherichia coli (strain SMS-3-5 / SECEC), this protein is Membrane-bound lytic murein transglycosylase C.